The chain runs to 420 residues: Exodeoxyribonuclease 7 large subunit (420 aa).

The protein belongs to the XseA family. In terms of assembly, heterooligomer composed of large and small subunits.

The protein localises to the cytoplasm. The catalysed reaction is Exonucleolytic cleavage in either 5'- to 3'- or 3'- to 5'-direction to yield nucleoside 5'-phosphates.. Bidirectionally degrades single-stranded DNA into large acid-insoluble oligonucleotides, which are then degraded further into small acid-soluble oligonucleotides. The protein is Exodeoxyribonuclease 7 large subunit of Helicobacter pylori (strain HPAG1).